The primary structure comprises 250 residues: Putative beta-carotene-binding protein (250 aa).

In terms of tissue distribution, deposited in the epidermis and cuticle of male locusts during their sexual maturation.

Functionally, has beta-carotene-binding activity. May be involved in the transport of carotenes from internal tissues to epidermis and cuticle of the locust. The protein is Putative beta-carotene-binding protein of Schistocerca gregaria (Desert locust).